Consider the following 183-residue polypeptide: Large ribosomal subunit protein uL6 (183 aa).

Belongs to the universal ribosomal protein uL6 family. In terms of assembly, part of the 50S ribosomal subunit.

In terms of biological role, this protein binds to the 23S rRNA, and is important in its secondary structure. It is located near the subunit interface in the base of the L7/L12 stalk, and near the tRNA binding site of the peptidyltransferase center. This is Large ribosomal subunit protein uL6 from Chlamydia trachomatis serovar L2 (strain ATCC VR-902B / DSM 19102 / 434/Bu).